Reading from the N-terminus, the 126-residue chain is C-type natriuretic peptide (126 aa).

Residues 1 to 23 (MHLSQLLACALLLTLLSLRPSEA) form the signal peptide. A disordered region spans residues 20-71 (PSEAKPGAPPKVPRTPPAEELAEPQAAGGGQKKGDKAPGGGGANLKGDRSRL). A propeptide spanning residues 24-73 (KPGAPPKVPRTPPAEELAEPQAAGGGQKKGDKAPGGGGANLKGDRSRLLR) is cleaved from the precursor. The segment covering 26–35 (GAPPKVPRTP) has biased composition (pro residues). A compositionally biased stretch (gly residues) spans 46-63 (AGGGQKKGDKAPGGGGAN). Residues cysteine 110 and cysteine 126 are joined by a disulfide bond.

This sequence belongs to the natriuretic peptide family. Degraded by IDE (in vitro). In the kidney, predominantly expressed in the distal tubular cells (at protein level).

The protein localises to the secreted. Functionally, hormone which plays a role in endochondral ossification through regulation of cartilaginous growth plate chondrocytes proliferation and differentiation. May also be vasoactive and natriuretic. Acts by specifically binding and stimulating NPR2 to produce cGMP. Binds the clearance receptor NPR3. This Homo sapiens (Human) protein is C-type natriuretic peptide (NPPC).